Reading from the N-terminus, the 762-residue chain is Mitochondrial intermediate peptidase (762 aa).

Residues 1-28 constitute a mitochondrion transit peptide; that stretch reads MQVRTLLTLGKKKVIGNRQCILSLYRKY. His-544 is a Zn(2+) binding site. Glu-545 is an active-site residue. Positions 548 and 551 each coordinate Zn(2+).

This sequence belongs to the peptidase M3 family. It depends on Zn(2+) as a cofactor.

It is found in the mitochondrion matrix. The enzyme catalyses Release of an N-terminal octapeptide as second stage of processing of some proteins imported into the mitochondrion.. Functionally, cleaves proteins, imported into the mitochondrion, to their mature size. While most mitochondrial precursor proteins are processed to the mature form in one step by mitochondrial processing peptidase (MPP), the sequential cleavage by MIP of an octapeptide after initial processing by MPP is a required step for a subgroup of nuclear-encoded precursor proteins destined for the matrix or the inner membrane. This chain is Mitochondrial intermediate peptidase (oct1), found in Schizosaccharomyces pombe (strain 972 / ATCC 24843) (Fission yeast).